The chain runs to 417 residues: Probable secreted aspartic protease ARB_07536 (417 aa).

Positions 1 to 20 (MRGILILVALGAATIPQASA) are cleaved as a signal peptide. One can recognise a Peptidase A1 domain in the interval 42–413 (NTDLVTIGTP…DFEKNRVGLA (372 aa)). N-linked (GlcNAc...) asparagine glycans are attached at residues Asn74, Asn91, Asn100, Asn170, Asn276, and Asn314. Cysteines 333 and 373 form a disulfide.

The protein belongs to the peptidase A1 family.

The protein resides in the secreted. In terms of biological role, probable secreted aspartic protease that supplies the fungus with nutrient amino acids. May be able to degrade the selected host's proteins involved in the immune defense. This Arthroderma benhamiae (strain ATCC MYA-4681 / CBS 112371) (Trichophyton mentagrophytes) protein is Probable secreted aspartic protease ARB_07536.